We begin with the raw amino-acid sequence, 707 residues long: Golgin candidate 1 (707 aa).

The Cytoplasmic segment spans residues 1 to 664; that stretch reads MASWLKAAED…RATRFLWRYP (664 aa). 3 disordered regions span residues 22–106, 121–196, and 234–256; these read VVED…EIHP, VADT…SKRD, and QEPK…ADTT. Positions 38-47 are enriched in low complexity; sequence SGRKGSQGKR. Basic and acidic residues predominate over residues 56–67; that stretch reads VKEESSNKRDSS. Residues 68–80 show a composition bias toward polar residues; it reads GDQSGPGVSQSEV. Residues 83–95 show a composition bias toward low complexity; the sequence is SKSSVSTDETSSS. Composition is skewed to basic and acidic residues over residues 139–150, 185–196, and 245–254; these read DGDRSESKHADG, TQRELDDSSKRD, and LKREQDRRAD. Coiled-coil stretches lie at residues 287–424 and 452–608; these read RVCA…NATK and ADER…KSRV. A helical; Signal-anchor for type II membrane protein membrane pass occupies residues 665–685; the sequence is IARMFLLFYLVFVHLFLMYLI. Topologically, residues 686–707 are lumenal; sequence HRLQEQAEAQEVAAMTNNVFRL.

It is found in the golgi apparatus membrane. Its function is as follows. Golgi matrix protein playing a role in tethering of vesicles to Golgi membranes and in maintaining the overall structure of the Golgi apparatus. The sequence is that of Golgin candidate 1 (GC1) from Arabidopsis thaliana (Mouse-ear cress).